The sequence spans 127 residues: Cuticle protein 4 (127 aa).

A Pyrrolidone carboxylic acid modification is found at glutamine 1. Tandem repeats lie at residues 31–39 (PADTKKAEI) and 84–92 (PADTKKAEI).

The chain is Cuticle protein 4 from Blaberus craniifer (Death's head cockroach).